Here is a 268-residue protein sequence, read N- to C-terminus: Tryptophan synthase alpha chain (268 aa).

Residues Glu49 and Asp60 each act as proton acceptor in the active site.

It belongs to the TrpA family. As to quaternary structure, tetramer of two alpha and two beta chains.

The enzyme catalyses (1S,2R)-1-C-(indol-3-yl)glycerol 3-phosphate + L-serine = D-glyceraldehyde 3-phosphate + L-tryptophan + H2O. It participates in amino-acid biosynthesis; L-tryptophan biosynthesis; L-tryptophan from chorismate: step 5/5. The alpha subunit is responsible for the aldol cleavage of indoleglycerol phosphate to indole and glyceraldehyde 3-phosphate. The chain is Tryptophan synthase alpha chain from Escherichia coli O81 (strain ED1a).